The sequence spans 785 residues: Probable cationic amino acid transporter (785 aa).

15 helical membrane-spanning segments follow: residues 58–78 (LVSLGVGSCVGTGMYVVSGLV), 83–103 (AGPGVIVSFIIAAVASILSGV), 119–141 (AYTYSYVTVGEFVAFFIGWNLIL), 187–207 (YPDILALVIGILVTVIVALGV), 216–236 (VLNVINLVVWVFIMIAGLFFV), 251–271 (WSGVMQGAATCFYAFIGFDII), 291–311 (ASLVTCLTAYVSVSVILTLMV), 337–357 (IVAIGSIAGLTVSLLGSLFPM), 360–380 (VIYAMAGDGLLFRFLAHVSTY), 384–404 (PAVACVVSGFLSALLALLVSL), 407–427 (LIEMMSIGTLLAYTLVSVCVL), 568–588 (CVVLLFILIFCFCSLIIFGSG), 596–616 (WAVLLLVVLLLVLTLLVFIII), 628–648 (MAPCVPFVPASAMLVNVYLML), and 655–675 (WIRFGVWCFVGVLIYFGYGMW). The disordered stretch occupies residues 715 to 785 (DQGPFQNWGK…VDDDLDDPLE (71 aa)). Residues 727–740 (QQKQPQQEQSEPQS) show a composition bias toward low complexity. Residues 775–785 (VVDDDLDDPLE) are compositionally biased toward acidic residues.

Belongs to the amino acid-polyamine-organocation (APC) superfamily.

The protein resides in the lysosome membrane. May be involved in arginine transport. The protein is Probable cationic amino acid transporter (slc7a14a) of Danio rerio (Zebrafish).